A 577-amino-acid chain; its full sequence is Arginine--tRNA ligase (577 aa).

Positions 122-132 (PNVAKEMHVGH) match the 'HIGH' region motif.

This sequence belongs to the class-I aminoacyl-tRNA synthetase family. As to quaternary structure, monomer.

It is found in the cytoplasm. The catalysed reaction is tRNA(Arg) + L-arginine + ATP = L-arginyl-tRNA(Arg) + AMP + diphosphate. In Klebsiella pneumoniae subsp. pneumoniae (strain ATCC 700721 / MGH 78578), this protein is Arginine--tRNA ligase.